Reading from the N-terminus, the 1249-residue chain is Minor capsid protein M1249L (1249 aa).

Belongs to the asfivirus M1249L family. As to quaternary structure, interacts with the minor capsid protein p17 and with the hexon capsid protein p72 capsomers; these interactions form a rigid zipper structure that stabilizes the capsomers. Interacts with host IRF3.

It is found in the virion. It localises to the host cytoplasm. In terms of biological role, together with the penton and the other minor capsid proteins (p17, p49), forms a complicated network immediately below the outer capsid shell, stabilizing the whole capsid. In addition, blocks IFN-beta transactivation mediated by the cGAS-STING pathway and regulates the transcriptional activity of IFN-beta. Mechanistically, suppresses the phosphorylation of host key adapter protein TBK1 and degrades host IRF3 in the cytoplasm. The protein is Minor capsid protein M1249L of Ornithodoros (relapsing fever ticks).